Reading from the N-terminus, the 1461-residue chain is Calmodulin-regulated spectrin-associated protein 2 (1461 aa).

The 114-residue stretch at Pro-211–Glu-324 folds into the Calponin-homology (CH) domain. The interval Arg-361 to Ser-389 is disordered. 2 stretches are compositionally biased toward low complexity: residues Asp-362–Ser-371 and Ser-380–Ser-389. Phosphoserine occurs at positions 391 and 393. A Phosphothreonine modification is found at Thr-401. 5 positions are modified to phosphoserine: Ser-439, Ser-572, Ser-573, Ser-585, and Ser-647. Disordered stretches follow at residues Ser-573–Ser-613 and Ala-639–Leu-704. Residue Thr-652 is modified to Phosphothreonine. Residue Ser-654 is modified to Phosphoserine. Positions Ser-654 to Ser-673 are enriched in low complexity. Basic and acidic residues predominate over residues Gln-677 to Gly-687. Residues Leu-730–Met-767 adopt a coiled-coil conformation. Over residues Arg-787–Met-826 the composition is skewed to basic and acidic residues. The segment at Arg-787–Glu-855 is disordered. Ser-836 carries the phosphoserine modification. The stretch at Glu-861–Gln-900 forms a coiled coil. The interval Met-896 to Gly-1007 is MBD region. 2 positions are modified to phosphoserine: Ser-905 and Ser-910. Disordered stretches follow at residues Arg-921–Ser-992, Val-1004–Glu-1044, Asn-1069–Pro-1090, Asp-1102–Gln-1124, and Lys-1163–Gly-1321. Low complexity predominate over residues Ser-926–Pro-937. Over residues Ser-943–Pro-962 the composition is skewed to polar residues. Thr-970, Thr-975, and Thr-977 each carry phosphothreonine. Phosphoserine is present on residues Ser-981 and Ser-992. Residues Glu-1011 to Glu-1028 show a composition bias toward basic and acidic residues. Residues Thr-1077–Ala-1089 show a composition bias toward pro residues. Basic and acidic residues-rich tracts occupy residues Lys-1104–Gln-1124 and Lys-1163–Ile-1224. Ser-1120 carries the phosphoserine modification. A coiled-coil region spans residues Lys-1138–Arg-1210. Residues Ser-1259 to Ser-1271 show a composition bias toward polar residues. Phosphoserine occurs at positions 1285, 1291, and 1293. Positions Asn-1306–Glu-1318 are enriched in polar residues. The 135-residue stretch at Gly-1321–Lys-1455 folds into the CKK domain.

Belongs to the CAMSAP1 family. Interacts with CAMSAP3. Interacts with KATNA1 and KATNB1; leading to regulate the length of CAMSAP2-decorated microtubule stretches. Interacts with a complex formed by AKAP9 and PDE4DIP isoform 2/MMG8/SMYLE, which recruits CAMSAP2 to the Golgi. Interacts with MAPRE1/EB1.

It is found in the cytoplasm. The protein resides in the cytoskeleton. Its subcellular location is the golgi apparatus. It localises to the cilium basal body. Key microtubule-organizing protein that specifically binds the minus-end of non-centrosomal microtubules and regulates their dynamics and organization. Specifically recognizes growing microtubule minus-ends and autonomously decorates and stabilizes microtubule lattice formed by microtubule minus-end polymerization. Acts on free microtubule minus-ends that are not capped by microtubule-nucleating proteins or other factors and protects microtubule minus-ends from depolymerization. In addition, it also reduces the velocity of microtubule polymerization. Through the microtubule cytoskeleton, also regulates the organization of cellular organelles including the Golgi and the early endosomes. Essential for the tethering, but not for nucleation of non-centrosomal microtubules at the Golgi: together with Golgi-associated proteins AKAP9 and PDE4DIP, required to tether non-centrosomal minus-end microtubules to the Golgi, an important step for polarized cell movement. Also acts as a regulator of neuronal polarity and development: localizes to non-centrosomal microtubule minus-ends in neurons and stabilizes non-centrosomal microtubules, which is required for neuronal polarity, axon specification and dendritic branch formation. Through the microtubule cytoskeleton, regulates the autophagosome transport. The polypeptide is Calmodulin-regulated spectrin-associated protein 2 (Mus musculus (Mouse)).